The chain runs to 98 residues: High mobility group nucleosome-binding domain-containing protein 3 (98 aa).

Composition is skewed to basic and acidic residues over residues 1–25 (MPKR…EPTR), 39–52 (PEPK…KEPG), 61–71 (GKKDEKQEAAK), and 80–98 (GENK…DKNE). The disordered stretch occupies residues 1-98 (MPKRKSPEGA…KTESVGDKNE (98 aa)).

This sequence belongs to the HMGN family.

The protein resides in the nucleus. This chain is High mobility group nucleosome-binding domain-containing protein 3 (HMGN3), found in Gallus gallus (Chicken).